The sequence spans 377 residues: Chaperone protein DnaJ (377 aa).

The J domain maps to 5-69 (EYYDRLGVSK…QKRAAYDQYG (65 aa)). The segment at 133–215 (GTEKEVHYNR…CHGTGHEKQS (83 aa)) adopts a CR-type zinc-finger fold. Zn(2+)-binding residues include Cys146, Cys149, Cys163, Cys166, Cys189, Cys192, Cys203, and Cys206. CXXCXGXG motif repeat units lie at residues 146-153 (CHTCNGSG), 163-170 (CSKCHGSG), 189-196 (CDVCHGTG), and 203-210 (CPTCHGTG).

The protein belongs to the DnaJ family. As to quaternary structure, homodimer. Zn(2+) serves as cofactor.

Its subcellular location is the cytoplasm. In terms of biological role, participates actively in the response to hyperosmotic and heat shock by preventing the aggregation of stress-denatured proteins and by disaggregating proteins, also in an autonomous, DnaK-independent fashion. Unfolded proteins bind initially to DnaJ; upon interaction with the DnaJ-bound protein, DnaK hydrolyzes its bound ATP, resulting in the formation of a stable complex. GrpE releases ADP from DnaK; ATP binding to DnaK triggers the release of the substrate protein, thus completing the reaction cycle. Several rounds of ATP-dependent interactions between DnaJ, DnaK and GrpE are required for fully efficient folding. Also involved, together with DnaK and GrpE, in the DNA replication of plasmids through activation of initiation proteins. This chain is Chaperone protein DnaJ, found in Streptococcus mutans serotype c (strain ATCC 700610 / UA159).